Reading from the N-terminus, the 393-residue chain is Glycerol-3-phosphate dehydrogenase [NAD(+)] 1 (393 aa).

NAD(+) is bound by residues 45 to 50 (GSGNWG), Phe-133, Lys-157, and Ala-190. Lys-157 serves as a coordination point for substrate. Catalysis depends on Lys-250, which acts as the Proton acceptor. NAD(+) contacts are provided by Arg-316 and Gln-345. 316-317 (RN) contributes to the substrate binding site.

This sequence belongs to the NAD-dependent glycerol-3-phosphate dehydrogenase family.

It carries out the reaction sn-glycerol 3-phosphate + NAD(+) = dihydroxyacetone phosphate + NADH + H(+). The protein is Glycerol-3-phosphate dehydrogenase [NAD(+)] 1 (gpd1) of Cyberlindnera jadinii (Torula yeast).